The following is a 418-amino-acid chain: Serine hydroxymethyltransferase (418 aa).

(6S)-5,6,7,8-tetrahydrofolate contacts are provided by residues leucine 121 and 125–127; that span reads GHL. Lysine 230 is modified (N6-(pyridoxal phosphate)lysine). Residues glutamate 246 and 355 to 357 contribute to the (6S)-5,6,7,8-tetrahydrofolate site; that span reads SPF.

It belongs to the SHMT family. In terms of assembly, homodimer. It depends on pyridoxal 5'-phosphate as a cofactor.

Its subcellular location is the cytoplasm. The enzyme catalyses (6R)-5,10-methylene-5,6,7,8-tetrahydrofolate + glycine + H2O = (6S)-5,6,7,8-tetrahydrofolate + L-serine. It functions in the pathway one-carbon metabolism; tetrahydrofolate interconversion. Its pathway is amino-acid biosynthesis; glycine biosynthesis; glycine from L-serine: step 1/1. In terms of biological role, catalyzes the reversible interconversion of serine and glycine with tetrahydrofolate (THF) serving as the one-carbon carrier. This reaction serves as the major source of one-carbon groups required for the biosynthesis of purines, thymidylate, methionine, and other important biomolecules. Also exhibits THF-independent aldolase activity toward beta-hydroxyamino acids, producing glycine and aldehydes, via a retro-aldol mechanism. The protein is Serine hydroxymethyltransferase of Streptococcus pneumoniae serotype 19F (strain G54).